A 555-amino-acid polypeptide reads, in one-letter code: NAD-dependent protein deacetylase sirtuin-1 (555 aa).

Positions 39 to 46 (PPKRKKRK) match the Nuclear localization signal motif. The 261-residue stretch at 44–304 (KRKDINTIED…NELCHRLGGE (261 aa)) folds into the Deacetylase sirtuin-type domain. An N6-acetyllysine modification is found at Lys46. The interval 64 to 67 (IIVL) is required for interaction with the sumoylated form of CCAR2. NAD(+) contacts are provided by residues 69 to 88 (GAGVSVSCGIPDFRSRDGIY) and 153 to 156 (QNID). His171 functions as the Proton acceptor in the catalytic mechanism. Zn(2+) contacts are provided by Cys179 and Cys182. At Lys185 the chain carries N6-acetyllysine. 2 residues coordinate Zn(2+): Cys203 and Cys206. An S-nitrosocysteine mark is found at Cys203 and Cys206. The residue at position 238 (Lys238) is an N6-acetyllysine. The Nuclear export signal motif lies at 241-247 (VDLLIVI). NAD(+) contacts are provided by residues 248–250 (GSS), 273–275 (NRE), and Cys290. Residue Lys321 is modified to N6-acetyllysine. Residues 335 to 354 (LPPTPLHISEDSSSPERTVP) form a disordered region. Position 338 is a phosphothreonine (Thr338). Phosphoserine is present on Ser343. The segment covering 345–354 (DSSSPERTVP) has biased composition (polar residues). Thr352 carries the post-translational modification Phosphothreonine. Lys417 is subject to N6-acetyllysine. A phosphoserine mark is found at Ser466 and Ser468. Residues 469 to 529 (EDDALSSSSC…GGSGADGGDQ (61 aa)) form a disordered region. A compositionally biased stretch (low complexity) spans 473 to 493 (LSSSSCGSNSDSGTCQSPSLE). Acidic residues predominate over residues 494–514 (EPLEDESEIEEFYNGLEDDAD). A Phosphoserine modification is found at Ser552.

This sequence belongs to the sirtuin family. Class I subfamily. As to quaternary structure, interacts with XBP1 isoform 2. Found in a complex with PCAF and MYOD1. Interacts with FOXO1; the interaction deacetylates FOXO1, resulting in its nuclear retention and promotion of its transcriptional activity Component of the eNoSC complex, composed of SIRT1, SUV39H1 and RRP8. Interacts with HES1, HEY2 and PML. Interacts with RPS19BP1/AROS. Interacts with CCAR2 (via N-terminus); the interaction disrupts the interaction between SIRT1 and p53/TP53. Interacts with SETD7; the interaction induces the dissociation of SIRT1 from p53/TP53 and increases p53/TP53 activity. Interacts with MYCN, NR1I2, CREBZF, TSC2, TLE1, FOS, JUN, NR0B2, PPARG, NCOR, IRS1, IRS2 and NMNAT1. Interacts with HNF1A; the interaction occurs under nutrient restriction. Interacts with SUZ12; the interaction mediates the association with the PRC4 histone methylation complex which is specific as an association with PCR2 and PCR3 complex variants is not found. Interacts with HIV-1 tat. Interacts with BCL6; leads to a epigenetic repression of specific target genes. Interacts with CLOCK, BMAL1 and PER2. Interacts with PPARA; the interaction seems to be modulated by NAD(+) levels. Interacts with NR1H3 and this interaction is inhibited in the presence of CCAR2. Interacts with CHEK2. Interacts with p53/TP53. Exhibits a preferential interaction with sumoylated CCAR2 over its unmodified form. Interacts with PACS2. Interacts with SIRT7. Interacts with PUS7. Interacts with TULP3. Interacts with MORN3; the interaction enhances the ubiquitination of p53/TP53. Zn(2+) is required as a cofactor. Methylated on multiple lysine residues; methylation is enhanced after DNA damage and is dispensable for deacetylase activity toward p53/TP53. Post-translationally, phosphorylated. Phosphorylated by STK4/MST1, resulting in inhibition of SIRT1-mediated p53/TP53 deacetylation. Phosphorylation by MAPK8/JNK1 at Thr-338 leads to increased nuclear localization and enzymatic activity. Phosphorylation at Thr-338 by DYRK1A and DYRK3 activates deacetylase activity and promotes cell survival. Phosphorylated by CaMK2, leading to increased p53/TP53 and NF-kappa-B p65/RELA deacetylation activity. In terms of processing, S-nitrosylated by GAPDH, leading to inhibit the NAD-dependent protein deacetylase activity. Acetylated at various Lys residues. Deacetylated via an autocatalytic mechanism. Autodeacetylation at Lys-46 promotes its protein deacetylase activity. Post-translationally, ubiquitinated; leading to degradation. Deubiquitinated by USP22; leading to stabilization.

It localises to the nucleus. It is found in the PML body. Its subcellular location is the cytoplasm. The catalysed reaction is N(6)-acetyl-L-lysyl-[protein] + NAD(+) + H2O = 2''-O-acetyl-ADP-D-ribose + nicotinamide + L-lysyl-[protein]. It catalyses the reaction N(6)-propanoyl-L-lysyl-[protein] + NAD(+) + H2O = 3''-O-propanoyl-ADP-D-ribose + nicotinamide + L-lysyl-[protein]. It carries out the reaction N(6)-(2E)-butenoyl-L-lysyl-[protein] + NAD(+) + H2O = 2''-O-(2E)-but-2-enoyl-ADP-D-ribose + nicotinamide + L-lysyl-[protein]. With respect to regulation, inhibited by nicotinamide. Activated by resveratrol (3,5,4'-trihydroxy-trans-stilbene), butein (3,4,2',4'-tetrahydroxychalcone), piceatannol (3,5,3',4'-tetrahydroxy-trans-stilbene), Isoliquiritigenin (4,2',4'-trihydroxychalcone), fisetin (3,7,3',4'-tetrahydroxyflavone) and quercetin (3,5,7,3',4'-pentahydroxyflavone). MAPK8/JNK1 and RPS19BP1/AROS act as positive regulators of deacetylation activity. Negatively regulated by CCAR2. Functionally, NAD-dependent protein deacetylase that links transcriptional regulation directly to intracellular energetics and participates in the coordination of several separated cellular functions such as cell cycle, response to DNA damage, metabolism, apoptosis and autophagy. Can modulate chromatin function through deacetylation of histones and can promote alterations in the methylation of histones and DNA, leading to transcriptional repression. Deacetylates a broad range of transcription factors and coregulators, thereby regulating target gene expression positively and negatively. Serves as a sensor of the cytosolic ratio of NAD(+)/NADH which is altered by glucose deprivation and metabolic changes associated with caloric restriction. Is essential in skeletal muscle cell differentiation and in response to low nutrients mediates the inhibitory effect on skeletal myoblast differentiation which also involves 5'-AMP-activated protein kinase (AMPK) and nicotinamide phosphoribosyltransferase (NAMPT). Component of the eNoSC (energy-dependent nucleolar silencing) complex, a complex that mediates silencing of rDNA in response to intracellular energy status and acts by recruiting histone-modifying enzymes. The eNoSC complex is able to sense the energy status of cell: upon glucose starvation, elevation of NAD(+)/NADP(+) ratio activates SIRT1, leading to histone H3 deacetylation followed by dimethylation of H3 at 'Lys-9' (H3K9me2) by SUV39H1 and the formation of silent chromatin in the rDNA locus. Deacetylates 'Lys-266' of SUV39H1, leading to its activation. Inhibits skeletal muscle differentiation by deacetylating PCAF and MYOD1. Deacetylates H2A and 'Lys-26' of H1-4. Deacetylates 'Lys-16' of histone H4 (in vitro). Involved in NR0B2/SHP corepression function through chromatin remodeling: Recruited to LRH1 target gene promoters by NR0B2/SHP thereby stimulating histone H3 and H4 deacetylation leading to transcriptional repression. Proposed to contribute to genomic integrity via positive regulation of telomere length; however, reports on localization to pericentromeric heterochromatin are conflicting. Proposed to play a role in constitutive heterochromatin (CH) formation and/or maintenance through regulation of the available pool of nuclear SUV39H1. Upon oxidative/metabolic stress decreases SUV39H1 degradation by inhibiting SUV39H1 polyubiquitination by MDM2. This increase in SUV39H1 levels enhances SUV39H1 turnover in CH, which in turn seems to accelerate renewal of the heterochromatin which correlates with greater genomic integrity during stress response. Deacetylates 'Lys-382' of p53/TP53 and impairs its ability to induce transcription-dependent proapoptotic program and modulate cell senescence. Deacetylates TAF1B and thereby represses rDNA transcription by the RNA polymerase I. Deacetylates MYC, promotes the association of MYC with MAX and decreases MYC stability leading to compromised transformational capability. Deacetylates FOXO3 in response to oxidative stress thereby increasing its ability to induce cell cycle arrest and resistance to oxidative stress but inhibiting FOXO3-mediated induction of apoptosis transcriptional activity; also leading to FOXO3 ubiquitination and protesomal degradation. Appears to have a similar effect on MLLT7/FOXO4 in regulation of transcriptional activity and apoptosis. Deacetylates DNMT1; thereby impairs DNMT1 methyltransferase-independent transcription repressor activity, modulates DNMT1 cell cycle regulatory function and DNMT1-mediated gene silencing. Deacetylates RELA/NF-kappa-B p65 thereby inhibiting its transactivating potential and augments apoptosis in response to TNF-alpha. Deacetylates HIF1A, KAT5/TIP60, RB1 and HIC1. Deacetylates FOXO1 resulting in its nuclear retention and enhancement of its transcriptional activity leading to increased gluconeogenesis in liver. Inhibits E2F1 transcriptional activity and apoptotic function, possibly by deacetylation. Involved in HES1- and HEY2-mediated transcriptional repression. In cooperation with MYCN seems to be involved in transcriptional repression of DUSP6/MAPK3 leading to MYCN stabilization by phosphorylation at 'Ser-62'. Deacetylates MEF2D. Required for antagonist-mediated transcription suppression of AR-dependent genes which may be linked to local deacetylation of histone H3. Represses HNF1A-mediated transcription. Required for the repression of ESRRG by CREBZF. Deacetylates NR1H3 AND NR1H2 and deacetylation of NR1H3 at 'Lys-434' positively regulates transcription of NR1H3:RXR target genes, promotes NR1H3 proteasomal degradation and results in cholesterol efflux; a promoter clearing mechanism after reach round of transcription is proposed. Involved in lipid metabolism: deacetylates LPIN1, thereby inhibiting diacylglycerol synthesis. Implicated in regulation of adipogenesis and fat mobilization in white adipocytes by repression of PPARG which probably involves association with NCOR1 and SMRT/NCOR2. Deacetylates p300/EP300 and PRMT1. Deacetylates ACSS2 leading to its activation, and HMGCS1 deacetylation. Involved in liver and muscle metabolism. Through deacetylation and activation of PPARGC1A is required to activate fatty acid oxidation in skeletal muscle under low-glucose conditions and is involved in glucose homeostasis. Involved in regulation of PPARA and fatty acid beta-oxidation in liver. Involved in positive regulation of insulin secretion in pancreatic beta cells in response to glucose; the function seems to imply transcriptional repression of UCP2. Proposed to deacetylate IRS2 thereby facilitating its insulin-induced tyrosine phosphorylation. Deacetylates SREBF1 isoform SREBP-1C thereby decreasing its stability and transactivation in lipogenic gene expression. Involved in DNA damage response by repressing genes which are involved in DNA repair, such as XPC and TP73, deacetylating XRCC6/Ku70, and facilitating recruitment of additional factors to sites of damaged DNA, such as SIRT1-deacetylated NBN can recruit ATM to initiate DNA repair and SIRT1-deacetylated XPA interacts with RPA2. Also involved in DNA repair of DNA double-strand breaks by homologous recombination and specifically single-strand annealing independently of XRCC6/Ku70 and NBN. Promotes DNA double-strand breaks by mediating deacetylation of SIRT6. Transcriptional suppression of XPC probably involves an E2F4:RBL2 suppressor complex and protein kinase B (AKT) signaling. Transcriptional suppression of TP73 probably involves E2F4 and PCAF. Deacetylates WRN thereby regulating its helicase and exonuclease activities and regulates WRN nuclear translocation in response to DNA damage. Deacetylates APEX1 at 'Lys-6' and 'Lys-7' and stimulates cellular AP endonuclease activity by promoting the association of APEX1 to XRCC1. Catalyzes deacetylation of ERCC4/XPF, thereby impairing interaction with ERCC1 and nucleotide excision repair (NER). Increases p53/TP53-mediated transcription-independent apoptosis by blocking nuclear translocation of cytoplasmic p53/TP53 and probably redirecting it to mitochondria. Deacetylates XRCC6/Ku70 at 'Lys-539' and 'Lys-542' causing it to sequester BAX away from mitochondria thereby inhibiting stress-induced apoptosis. Is involved in autophagy, presumably by deacetylating ATG5, ATG7 and MAP1LC3B/ATG8. Deacetylates AKT1 which leads to enhanced binding of AKT1 and PDK1 to PIP3 and promotes their activation. Proposed to play role in regulation of STK11/LBK1-dependent AMPK signaling pathways implicated in cellular senescence which seems to involve the regulation of the acetylation status of STK11/LBK1. Can deacetylate STK11/LBK1 and thereby increase its activity, cytoplasmic localization and association with STRAD; however, the relevance of such activity in normal cells is unclear. In endothelial cells is shown to inhibit STK11/LBK1 activity and to promote its degradation. Deacetylates SMAD7 at 'Lys-64' and 'Lys-70' thereby promoting its degradation. Deacetylates CIITA and augments its MHC class II transactivation and contributes to its stability. Deacetylates MECOM/EVI1. Deacetylates PML at 'Lys-487' and this deacetylation promotes PML control of PER2 nuclear localization. During the neurogenic transition, represses selective NOTCH1-target genes through histone deacetylation in a BCL6-dependent manner and leading to neuronal differentiation. Regulates the circadian expression of several core clock genes, including BMAL1, RORC, PER2 and CRY1 and plays a critical role in maintaining a controlled rhythmicity in histone acetylation, thereby contributing to circadian chromatin remodeling. Deacetylates BMAL1 and histones at the circadian gene promoters in order to facilitate repression by inhibitory components of the circadian oscillator. Deacetylates PER2, facilitating its ubiquitination and degradation by the proteasome. Protects cardiomyocytes against palmitate-induced apoptosis. Deacetylates XBP1 isoform 2; deacetylation decreases protein stability of XBP1 isoform 2 and inhibits its transcriptional activity. Deacetylates PCK1 and directs its activity toward phosphoenolpyruvate production promoting gluconeogenesis. Involved in the CCAR2-mediated regulation of PCK1 and NR1D1. Deacetylates CTNB1 at 'Lys-49'. In POMC (pro-opiomelanocortin) neurons, required for leptin-induced activation of PI3K signaling. In addition to protein deacetylase activity, also acts as a protein-lysine deacylase by mediating protein depropionylation and decrotonylation. Mediates depropionylation of Osterix (SP7). Catalyzes decrotonylation of histones; it however does not represent a major histone decrotonylase. Deacetylates SOX9; promoting SOX9 nuclear localization and transactivation activity. Involved in the regulation of centrosome duplication. Deacetylates CENATAC in G1 phase, allowing for SASS6 accumulation on the centrosome and subsequent procentriole assembly. Deacetylates NDC80/HEC1. This is NAD-dependent protein deacetylase sirtuin-1 from Rattus norvegicus (Rat).